An 83-amino-acid polypeptide reads, in one-letter code: UPF0248 protein TGAM_1209 (83 aa).

It belongs to the UPF0248 family.

The sequence is that of UPF0248 protein TGAM_1209 from Thermococcus gammatolerans (strain DSM 15229 / JCM 11827 / EJ3).